The primary structure comprises 486 residues: Hematopoietic lineage cell-specific protein (486 aa).

The tract at residues 27-66 (FVNDISEKEQRWGAKTIEGSGRTEHINIHQLRNKVSEEHD) is involved in HAX-1 binding. K41 is subject to N6-acetyllysine. Cortactin repeat units lie at residues 79–115 (ASHG…SQTD), 116–152 (AARG…SQKD), and 153–189 (YSHG…SQRD). K123 carries the N6-acetyllysine modification. Phosphotyrosine is present on Y140. Residues 190 to 212 (YAKGFGGQYGIQKDRVDKSAVGF) form a Cortactin 4; truncated repeat. An N6-acetyllysine modification is found at K192. The residue at position 198 (Y198) is a Phosphotyrosine. A Phosphotyrosine; by FGR modification is found at Y222. The segment at 226–430 (TPIEAASSGA…AGPSAGAGGA (205 aa)) is disordered. 2 stretches are compositionally biased toward basic and acidic residues: residues 240–258 (AKFE…EEKA) and 265–276 (QQERKAVVKMSR). K241 is subject to N6-acetyllysine. Residue S275 is modified to Phosphoserine. The residue at position 330 (T330) is a Phosphothreonine. Residue S333 is modified to Phosphoserine. Positions 358–367 (VVEEPVYEAA) are enriched in low complexity. The segment covering 368-413 (PELEPEPEPDYEPEPETEPDYEDVGELDRQDEDAEGDYEDVLEPED) has biased composition (acidic residues). A phosphotyrosine; by SYK and FES mark is found at Y388 and Y405. An SH3 domain is found at 429-486 (GAGISAIALYDYQGEGSDELSFDPDDIITDIEMVDEGWWRGQCRGHFGLFPANYVKLL).

As to quaternary structure, interacts (via SH2 domain) with FGR. Associates with the SH2 and SH3 domains of LCK. Binding to he LCK SH3 domain occurs constitutively, while binding to the LCK SH2 domain occurs only upon TCR stimulation. A similar binding pattern was observed with LYN, but not with FYN in which the FYN SH2 region associates upon TCR stimulation but the FYN SH3 region does not associate regardless of TCR stimulation. Directly associates with HAX1, through binding to its C-terminal region. Interacts with HS1BP3. Interacts with FES/FPS. Forms a multiprotein complex with LYN and ANKRD54. In terms of processing, phosphorylated by LYN, FYN and FGR after cross-linking of surface IgM on B-cells. Phosphorylation by LYN, FYN and FGR requires prior phosphorylation by SYK. Binds to LCK in vivo, and is tyrosine phosphorylated upon TCR stimulation. Phosphorylated by FES. In terms of tissue distribution, expressed only in tissues and cells of hematopoietic origin.

The protein localises to the mitochondrion. Its function is as follows. Substrate of the antigen receptor-coupled tyrosine kinase. Plays a role in antigen receptor signaling for both clonal expansion and deletion in lymphoid cells. May also be involved in the regulation of gene expression. In Mus musculus (Mouse), this protein is Hematopoietic lineage cell-specific protein (Hcls1).